A 223-amino-acid polypeptide reads, in one-letter code: N-(5'-phosphoribosyl)anthranilate isomerase (223 aa).

It belongs to the TrpF family.

The catalysed reaction is N-(5-phospho-beta-D-ribosyl)anthranilate = 1-(2-carboxyphenylamino)-1-deoxy-D-ribulose 5-phosphate. It functions in the pathway amino-acid biosynthesis; L-tryptophan biosynthesis; L-tryptophan from chorismate: step 3/5. The sequence is that of N-(5'-phosphoribosyl)anthranilate isomerase from Moorella thermoacetica (strain ATCC 39073 / JCM 9320).